The chain runs to 204 residues: Kunitz type trypsin inhibitor 106 (204 aa).

The signal sequence occupies residues 1-26; the sequence is MSMRLSIRTLIILAHVCLFITTTTIA. N-linked (GlcNAc...) asparagine glycosylation is present at N62. A disulfide bond links C65 and C112. Residue N141 is glycosylated (N-linked (GlcNAc...) asparagine). Disulfide bonds link C164–C176 and C169–C172.

The protein belongs to the protease inhibitor I3 (leguminous Kunitz-type inhibitor) family. As to quaternary structure, interacts with SCP1 and CP. In terms of tissue distribution, expressed at low levels in non-mycorrhizal roots.

Its subcellular location is the secreted. It is found in the extracellular space. The protein resides in the apoplast. Its function is as follows. Protease inhibitor that, together with SCP1, controls mycorrhiza establishment and arbuscule development during root colonization by arbuscular mycorrhizal (AM) fungi (e.g. Rhizophagus irregularis), probably by degrading SCP1 in the apoplast of the periarbuscular region. The protein is Kunitz type trypsin inhibitor 106 of Medicago truncatula (Barrel medic).